The sequence spans 603 residues: Iron-sulfur clusters transporter ATM1, mitochondrial (603 aa).

A helical transmembrane segment spans residues 20–41; sequence VLLAVGLLVGGKVLNVQVPFFF. Residues 20-310 enclose the ABC transmembrane type-1 domain; sequence VLLAVGLLVG…LGSVYRELRQ (291 aa). Residues 42-64 lie on the Mitochondrial intermembrane side of the membrane; the sequence is REIVDSLNVDIAATGGTVATVAG. The helical transmembrane segment at 65 to 88 threads the bilayer; that stretch reads TMIFAYGASRIGAVVSQELRNAVF. Residues 89-137 lie on the Mitochondrial matrix side of the membrane; it reads SSVAQKAIRRVATRTFGHLLNLDLNFHLSKQTGGLTRAIDRGTKGISFL. A helical membrane pass occupies residues 138–161; it reads LTSMVFHIVPTALEISMVCGILTY. Gln-162 is a topological domain (mitochondrial intermembrane). The chain crosses the membrane as a helical span at residues 163–183; sequence FGWEFAAVTALTMSAYTAFTI. Over 184-249 the chain is Mitochondrial matrix; sequence WTTAWRTKFR…SSIKVATSLA (66 aa). Residues 189-193 and 252-255 each bind glutathione; these read RTKFR and NSGQ. The chain crosses the membrane as a helical span at residues 250-268; it reads FLNSGQNIIFSSALTIMMW. At 269–283 the chain is on the mitochondrial intermembrane side; the sequence is LGAKGIVAGSLSVGD. The helical transmembrane segment at 284–305 threads the bilayer; the sequence is LVLINQLVFQLSVPLNFLGSVY. Gly-302 contacts glutathione. Residues 306–603 lie on the Mitochondrial matrix side of the membrane; that stretch reads RELRQSLLDM…SEREAPVPVK (298 aa). Residues 345–581 enclose the ABC transporter domain; sequence IRFDNVSFGY…NGLYTELWMA (237 aa). Residues Tyr-354 and 378–389 contribute to the ATP site; that span reads GPSGCGKSTLLR.

The protein belongs to the ABC transporter superfamily. ABCB family. Heavy Metal importer (TC 3.A.1.210) subfamily. As to quaternary structure, homodimer.

It is found in the mitochondrion inner membrane. Its function is as follows. Performs an essential function in the generation of cytoplasmic iron-sulfur proteins by mediating the ATP-dependent export of Fe/S cluster precursors synthesized by NFS1 and other mitochondrial proteins. Hydrolyzes ATP. Binds glutathione and may function by transporting a glutathione-conjugated iron-sulfur compound. The chain is Iron-sulfur clusters transporter ATM1, mitochondrial from Chaetomium globosum (strain ATCC 6205 / CBS 148.51 / DSM 1962 / NBRC 6347 / NRRL 1970) (Soil fungus).